The primary structure comprises 534 residues: Peptide chain release factor 3 (534 aa).

The region spanning Ala9 to Gln278 is the tr-type G domain. Residues Ser18–Thr25, Asp86–His90, and Asn140–Asp143 each bind GTP.

The protein belongs to the TRAFAC class translation factor GTPase superfamily. Classic translation factor GTPase family. PrfC subfamily.

It is found in the cytoplasm. Increases the formation of ribosomal termination complexes and stimulates activities of RF-1 and RF-2. It binds guanine nucleotides and has strong preference for UGA stop codons. It may interact directly with the ribosome. The stimulation of RF-1 and RF-2 is significantly reduced by GTP and GDP, but not by GMP. This Xylella fastidiosa (strain M12) protein is Peptide chain release factor 3.